Consider the following 96-residue polypeptide: Co-chaperonin GroES (96 aa).

It belongs to the GroES chaperonin family. As to quaternary structure, heptamer of 7 subunits arranged in a ring. Interacts with the chaperonin GroEL.

The protein resides in the cytoplasm. Functionally, together with the chaperonin GroEL, plays an essential role in assisting protein folding. The GroEL-GroES system forms a nano-cage that allows encapsulation of the non-native substrate proteins and provides a physical environment optimized to promote and accelerate protein folding. GroES binds to the apical surface of the GroEL ring, thereby capping the opening of the GroEL channel. The polypeptide is Co-chaperonin GroES (Trichlorobacter lovleyi (strain ATCC BAA-1151 / DSM 17278 / SZ) (Geobacter lovleyi)).